A 502-amino-acid chain; its full sequence is Xyloglucan-specific endo-beta-1,4-glucanase BoGH5A (502 aa).

A signal peptide spans 1–32 (MEKQSFSDGLFSPLGIKRVIFMLVLLTTSFIS). Cys-33 carries N-palmitoyl cysteine lipidation. Cys-33 carries the S-diacylglycerol cysteine lipid modification. Residues 67 to 127 (GPAEWHISTS…PDIIINVKQS (61 aa)) enclose the BACON domain. Substrate is bound by residues Asn-165, Val-172, His-251, and Asn-296. Catalysis depends on Glu-297, which acts as the Proton donor. The active-site Nucleophile is Glu-430. Substrate is bound at residue Trp-472.

The protein belongs to the glycosyl hydrolase 5 (cellulase A) family.

The protein localises to the cell outer membrane. The catalysed reaction is xyloglucan + H2O = xyloglucan oligosaccharides.. It participates in glucan metabolism; xyloglucan degradation. Functionally, catalyzes endohydrolysis of 1,4-beta-D-glucosidic linkages in xyloglucan with retention of the beta-configuration of the glycosyl residues in xyloglucan degradation. Cleaves the backbone of the 3 major types of natural xyloglucans (seed galactoxyloglucan from tamarind kernel, dicot fucogalactoxyloglucan from lettuce leaves, and solanaceous arabinogalactoxyloglucan from tomato fruit), to produce xyloglucan oligosaccharides. In Bacteroides ovatus (strain ATCC 8483 / DSM 1896 / JCM 5824 / BCRC 10623 / CCUG 4943 / NCTC 11153), this protein is Xyloglucan-specific endo-beta-1,4-glucanase BoGH5A.